Consider the following 432-residue polypeptide: Adenylosuccinate synthetase (432 aa).

GTP-binding positions include 12–18 (GDEGKGK) and 40–42 (GHT). The active-site Proton acceptor is the aspartate 13. Mg(2+) is bound by residues aspartate 13 and glycine 40. Residues 13–16 (DEGK), 38–41 (NAGH), threonine 130, arginine 144, glutamine 225, threonine 240, and arginine 304 each bind IMP. Histidine 41 (proton donor) is an active-site residue. 300–306 (STTGRPR) contributes to the substrate binding site. GTP-binding positions include arginine 306, 332 to 334 (KLD), and 414 to 416 (SVG).

It belongs to the adenylosuccinate synthetase family. Homodimer. Requires Mg(2+) as cofactor.

Its subcellular location is the cytoplasm. The catalysed reaction is IMP + L-aspartate + GTP = N(6)-(1,2-dicarboxyethyl)-AMP + GDP + phosphate + 2 H(+). Its pathway is purine metabolism; AMP biosynthesis via de novo pathway; AMP from IMP: step 1/2. Its function is as follows. Plays an important role in the de novo pathway of purine nucleotide biosynthesis. Catalyzes the first committed step in the biosynthesis of AMP from IMP. The sequence is that of Adenylosuccinate synthetase from Geobacter sp. (strain M21).